We begin with the raw amino-acid sequence, 257 residues long: Probable amino-acid ABC transporter ATP-binding protein HI_1078 (257 aa).

The 241-residue stretch at 4–244 folds into the ABC transporter domain; the sequence is LKVSNIQKNF…PQHERTKQFL (241 aa). Position 36–43 (36–43) interacts with ATP; it reads GPSGSGKT.

The protein belongs to the ABC transporter superfamily.

It localises to the cell inner membrane. Functionally, probably part of a binding-protein-dependent transport system for an amino acid. Probably responsible for energy coupling to the transport system. This Haemophilus influenzae (strain ATCC 51907 / DSM 11121 / KW20 / Rd) protein is Probable amino-acid ABC transporter ATP-binding protein HI_1078.